We begin with the raw amino-acid sequence, 315 residues long: Small ribosomal subunit protein uS9m (315 aa).

A mitochondrion-targeting transit peptide spans 1–42 (MMASLRHSITSALRSSRQGCSKSAQWQSLDQQFGALRISSRS). The segment at 293-315 (PRKVERKKHGHVKARKMPTWVKR) is disordered. Over residues 296 to 315 (VERKKHGHVKARKMPTWVKR) the composition is skewed to basic residues.

The protein belongs to the universal ribosomal protein uS9 family. Component of the mitochondrial small ribosomal subunit (mt-SSU). Mature N.crassa 74S mitochondrial ribosomes consist of a small (37S) and a large (54S) subunit. The 37S small subunit contains a 16S ribosomal RNA (16S mt-rRNA) and 32 different proteins. The 54S large subunit contains a 23S rRNA (23S mt-rRNA) and 42 different proteins.

It is found in the mitochondrion. Component of the mitochondrial ribosome (mitoribosome), a dedicated translation machinery responsible for the synthesis of mitochondrial genome-encoded proteins, including at least some of the essential transmembrane subunits of the mitochondrial respiratory chain. The mitoribosomes are attached to the mitochondrial inner membrane and translation products are cotranslationally integrated into the membrane. The chain is Small ribosomal subunit protein uS9m (mrp-9) from Neurospora crassa (strain ATCC 24698 / 74-OR23-1A / CBS 708.71 / DSM 1257 / FGSC 987).